A 234-amino-acid polypeptide reads, in one-letter code: Putative N-acetylmannosamine-6-phosphate 2-epimerase (234 aa).

This sequence belongs to the NanE family.

It catalyses the reaction an N-acyl-D-glucosamine 6-phosphate = an N-acyl-D-mannosamine 6-phosphate. Its pathway is amino-sugar metabolism; N-acetylneuraminate degradation; D-fructose 6-phosphate from N-acetylneuraminate: step 3/5. In terms of biological role, converts N-acetylmannosamine-6-phosphate (ManNAc-6-P) to N-acetylglucosamine-6-phosphate (GlcNAc-6-P). In Klebsiella pneumoniae (strain 342), this protein is Putative N-acetylmannosamine-6-phosphate 2-epimerase.